Consider the following 1050-residue polypeptide: Self-sufficient cytochrome P450 monooxygenase CYP505E3 (1050 aa).

C406 contacts heme. Polar residues predominate over residues 459-481 (RGQSATGLSQGSMSASGATSSVA). A disordered region spans residues 459-495 (RGQSATGLSQGSMSASGATSSVASPGPPAATGAQSNP). The Flavodoxin-like domain maps to 501-641 (ISFFYGSNSG…DLELWEETNL (141 aa)). Residues 507-511 (SNSGT) and 585-617 (VFGC…TRLT) contribute to the FMN site. The 229-residue stretch at 679–907 (RGLVEAKVTA…RPAKDAFHLP (229 aa)) folds into the FAD-binding FR-type domain.

In the N-terminal section; belongs to the cytochrome P450 family. Requires FAD as cofactor. The cofactor is FMN. Heme is required as a cofactor.

It catalyses the reaction 2 oxidized [cytochrome P450] + NADPH = 2 reduced [cytochrome P450] + NADP(+) + H(+). It carries out the reaction an organic molecule + reduced [NADPH--hemoprotein reductase] + O2 = an alcohol + oxidized [NADPH--hemoprotein reductase] + H2O + H(+). The catalysed reaction is decane + reduced [NADPH--hemoprotein reductase] + O2 = 3-decanol + oxidized [NADPH--hemoprotein reductase] + H2O + H(+). The enzyme catalyses dodecane + reduced [NADPH--hemoprotein reductase] + O2 = 5-dodecanol + oxidized [NADPH--hemoprotein reductase] + H2O + H(+). It catalyses the reaction tetradecane + reduced [NADPH--hemoprotein reductase] + O2 = 7-tetradecanol + oxidized [NADPH--hemoprotein reductase] + H2O + H(+). It carries out the reaction hexadecane + reduced [NADPH--hemoprotein reductase] + O2 = 9-hexadecanol + oxidized [NADPH--hemoprotein reductase] + H2O + H(+). The catalysed reaction is dodecanoate + reduced [NADPH--hemoprotein reductase] + O2 = 5-hydroxydodecanoate + oxidized [NADPH--hemoprotein reductase] + H2O + H(+). The enzyme catalyses tetradecanoate + reduced [NADPH--hemoprotein reductase] + O2 = 7-hydroxytetradecanoate + oxidized [NADPH--hemoprotein reductase] + H2O + H(+). It catalyses the reaction hexadecanoate + reduced [NADPH--hemoprotein reductase] + O2 = 9-hydroxyhexadecanoate + oxidized [NADPH--hemoprotein reductase] + H2O + H(+). It carries out the reaction decan-1-ol + reduced [NADPH--hemoprotein reductase] + O2 = 1,3-decanediol + oxidized [NADPH--hemoprotein reductase] + H2O + H(+). The catalysed reaction is decan-1-ol + reduced [NADPH--hemoprotein reductase] + O2 = 1,7-decanediol + oxidized [NADPH--hemoprotein reductase] + H2O + H(+). The enzyme catalyses dodecan-1-ol + reduced [NADPH--hemoprotein reductase] + O2 = 1,5-dodecanediol + oxidized [NADPH--hemoprotein reductase] + H2O + H(+). It catalyses the reaction dodecan-1-ol + reduced [NADPH--hemoprotein reductase] + O2 = 1,4-dodecanediol + oxidized [NADPH--hemoprotein reductase] + H2O + H(+). It carries out the reaction dodecan-1-ol + reduced [NADPH--hemoprotein reductase] + O2 = 1,6-dodecanediol + oxidized [NADPH--hemoprotein reductase] + H2O + H(+). Self-sufficient cytochrome P450 monooxygenase that catalyzes the regioselective in-chain hydroxylation of alkanes, fatty alcohols, and fatty acids at the omega-7 position. Performs hydroxylation of C10-C16 n-alkanes and C12 and C14 fatty alcohols; and thereby enables the one step biocatalytic synthesis of rare alcohols such as 5-dodecanol and 7-tetradecanol. Converts 1-dodecanol into 1,5-dodecanediol as major product with very little sub-terminally hydroxylated products with the 1,4-dodecanediol and 1,6-dodecanediol more abundant. Does not use hexadecanediol nor decanoic acid as substrates. Converts dodecanoic acid to 5-hydroxydodecanoic acid which can be further converted into delta-dodecalactone by lactonization of the 5-hydroxy acid at low pH. Also gives sub-terminal hydroxylation of dodecanoic acid with 9-hydroxydodecanoic acid being the second most abundant product. The C14 and C16 fatty acids are double hydroxylated to yield dihydroxy acids hydroxylated at both the omega-7 position and a sub-terminal position (omega-1, omega-2, or omega-3). This chain is Self-sufficient cytochrome P450 monooxygenase CYP505E3, found in Aspergillus terreus (strain NIH 2624 / FGSC A1156).